A 197-amino-acid polypeptide reads, in one-letter code: MVHFSDSLSRLLAELQKLPGVGEKTALRLAFHLLKSPDNAAALADSLRDVMSRVRFCSVCFGITEDDPCRFCSDARDDGAICVVEEPQDLLAVERTRAFRGRYHVLQGALSPLNGVTPDRLRVAELMKRLEGGGVREVVIATNFTVEGEATALYLARMIKPLGVRVTRLAHGIPLGSDLEFVDAATVQRALEGRSEL.

The C4-type zinc finger occupies 57 to 72 (CSVCFGITEDDPCRFC). Residues 79–174 (GAICVVEEPQ…RVTRLAHGIP (96 aa)) form the Toprim domain.

The protein belongs to the RecR family.

In terms of biological role, may play a role in DNA repair. It seems to be involved in an RecBC-independent recombinational process of DNA repair. It may act with RecF and RecO. This Geobacter sulfurreducens (strain ATCC 51573 / DSM 12127 / PCA) protein is Recombination protein RecR.